The following is an 861-amino-acid chain: APC membrane recruitment protein 3 (861 aa).

8 disordered regions span residues 1-77 (MELK…PKGG), 179-206 (AEGK…PPGE), 261-289 (PSLE…GPLQ), 351-415 (PLCP…FPRD), 514-558 (RGPT…GGAT), 576-644 (GLLA…SQKE), 716-742 (MLEQ…STQD), and 786-822 (AHGS…SQQE). Positions 362-384 (SKASSIDTGTPKSEQPESVSTSD) are enriched in polar residues. Residues 518-530 (PRAPPTPGQPAAP) show a composition bias toward pro residues. The segment covering 584–595 (ALGGATQGTGTL) has biased composition (low complexity). Residues 598–609 (DASREEETRGHS) show a composition bias toward basic and acidic residues. Composition is skewed to polar residues over residues 615–629 (SMES…TSGK) and 719–730 (QKQSSSSPSMTT).

It belongs to the Amer family.

It is found in the cell membrane. Regulator of the canonical Wnt signaling pathway. Acts by specifically binding phosphatidylinositol 4,5-bisphosphate (PtdIns(4,5)P2), translocating to the cell membrane. The protein is APC membrane recruitment protein 3 (AMER3) of Homo sapiens (Human).